Here is a 98-residue protein sequence, read N- to C-terminus: NADH-ubiquinone oxidoreductase chain 4L (98 aa).

The next 3 helical transmembrane spans lie at 1–21, 29–49, and 61–81; these read MTLI…GLLM, ALLC…LTIL, and IILL…LVMV.

Belongs to the complex I subunit 4L family. In terms of assembly, core subunit of respiratory chain NADH dehydrogenase (Complex I) which is composed of 45 different subunits.

It is found in the mitochondrion inner membrane. The enzyme catalyses a ubiquinone + NADH + 5 H(+)(in) = a ubiquinol + NAD(+) + 4 H(+)(out). Its function is as follows. Core subunit of the mitochondrial membrane respiratory chain NADH dehydrogenase (Complex I) which catalyzes electron transfer from NADH through the respiratory chain, using ubiquinone as an electron acceptor. Part of the enzyme membrane arm which is embedded in the lipid bilayer and involved in proton translocation. The protein is NADH-ubiquinone oxidoreductase chain 4L (MT-ND4L) of Balaenoptera borealis (Sei whale).